Consider the following 431-residue polypeptide: Argininosuccinate lyase (431 aa).

This sequence belongs to the lyase 1 family. Argininosuccinate lyase subfamily.

It is found in the cytoplasm. It carries out the reaction 2-(N(omega)-L-arginino)succinate = fumarate + L-arginine. It participates in amino-acid biosynthesis; L-arginine biosynthesis; L-arginine from L-ornithine and carbamoyl phosphate: step 3/3. The chain is Argininosuccinate lyase from Xanthomonas campestris pv. campestris (strain B100).